A 459-amino-acid polypeptide reads, in one-letter code: Ammonium transporter Rh type B (459 aa).

Residues 1-10 are Cytoplasmic-facing; sequence MAESTNLRLR. A helical transmembrane segment spans residues 11-31; that stretch reads LPLICIILEVILIILFGVLVE. Topologically, residues 32 to 58 are extracellular; the sequence is YNDDTDAKKWNKNNSTDPATNEFYYRY. N-linked (GlcNAc...) asparagine glycosylation occurs at N45. Residues 59-79 traverse the membrane as a helical segment; that stretch reads PSFQDVHVMIFVGFGFLMTFL. The Cytoplasmic portion of the chain corresponds to 80-87; sequence QRYGFSSM. The chain crosses the membrane as a helical span at residues 88 to 108; the sequence is GFNFLIAAFSLQWATLMQGFF. Residues 109–121 lie on the Extracellular side of the membrane; that stretch reads HGMHHGKIHVGVT. A helical membrane pass occupies residues 122–142; it reads SMINADFCTGAVLISFGAVLG. Residues 143–149 are Cytoplasmic-facing; sequence KTSPVQL. The helical transmembrane segment at 150–170 threads the bilayer; the sequence is LVMAILEVTLFAVNEYILLSI. Over 171 to 176 the chain is Extracellular; that stretch reads LGANDA. A helical membrane pass occupies residues 177–197; the sequence is GGSMTIHTFGAYFGLMVTRIL. Topologically, residues 198 to 216 are cytoplasmic; the sequence is HRPNLDKSKHKNSSVYHSD. A helical membrane pass occupies residues 217–237; sequence LFAMIGTIFLWMFWPSFNSAI. The Extracellular segment spans residues 238–248; that stretch reads TQYGDPQHRTA. A helical membrane pass occupies residues 249-269; that stretch reads ANTYYSLAACTLATFGFSSLV. Topologically, residues 270 to 274 are cytoplasmic; that stretch reads NPEGK. Residues 275 to 295 form a helical membrane-spanning segment; sequence LDMVHIQNAALAGGVAVGTAG. Residue E296 is a topological domain, extracellular. A helical membrane pass occupies residues 297-317; the sequence is MMLTPFGSMIVGFLAGTISVL. The Cytoplasmic portion of the chain corresponds to 318 to 340; sequence GYKYLTPFMESKLKIQDTCGIHN. A helical transmembrane segment spans residues 341-361; sequence LHGMPGILGAIVGAVTAALAS. Topologically, residues 362–392 are extracellular; that stretch reads RDVYGNGLDKVFLEAADNSQWSAQTKGGFQA. Residues 393-413 traverse the membrane as a helical segment; that stretch reads ISLAVTLGIALIGGLITGFLL. At 414–459 the chain is on the cytoplasmic side; that stretch reads KLPIYGTPPDTQCFEDAVYWEVPGEEEDHHELNEVSTQNEVEKLNS. The interval 440–459 is disordered; it reads EDHHELNEVSTQNEVEKLNS.

This sequence belongs to the ammonium transporter (TC 2.A.49) family. Rh subfamily.

It is found in the basolateral cell membrane. Its subcellular location is the cytoplasmic vesicle membrane. Its function is as follows. Functions as an ammonia transporter. May play a role in the elimination of ammonia in the gill. This Danio rerio (Zebrafish) protein is Ammonium transporter Rh type B (rhbg).